We begin with the raw amino-acid sequence, 515 residues long: Ent-isokaurene C2/C3-hydroxylase (515 aa).

Residues 5 to 25 (LILDLCLSALFVVVLSKLVSS) traverse the membrane as a helical segment. C452 lines the heme pocket.

This sequence belongs to the cytochrome P450 family. Heme is required as a cofactor.

It localises to the membrane. It carries out the reaction ent-isokaurene + 2 reduced [NADPH--hemoprotein reductase] + 2 O2 = ent-isokaurene-2beta,3beta-diol + 2 oxidized [NADPH--hemoprotein reductase] + 2 H2O + 2 H(+). Functionally, enzyme of the diterpenoid metabolism involved in the biosynthesis of antibacterial oryzalides such as phytocassane. This Oryza sativa subsp. japonica (Rice) protein is Ent-isokaurene C2/C3-hydroxylase (CYP71Z6).